A 320-amino-acid chain; its full sequence is Cyclin-H (320 aa).

Residue S5 is modified to Phosphoserine; by CDK8. Phosphoserine is present on S132. Position 304 is a phosphoserine; by CDK8 (S304).

It belongs to the cyclin family. Cyclin C subfamily. Associates primarily with CDK7 and MAT1 to form the CAK complex. CAK can further associate with the core-TFIIH to form the TFIIH basal transcription factor.

The protein resides in the nucleus. In terms of biological role, regulates CDK7, the catalytic subunit of the CDK-activating kinase (CAK) enzymatic complex. CAK activates the cyclin-associated kinases CDK1, CDK2, CDK4 and CDK6 by threonine phosphorylation. CAK complexed to the core-TFIIH basal transcription factor activates RNA polymerase II by serine phosphorylation of the repetitive C-terminal domain (CTD) of its large subunit (POLR2A), allowing its escape from the promoter and elongation of the transcripts. Involved in cell cycle control and in RNA transcription by RNA polymerase II. Its expression and activity are constant throughout the cell cycle. In Bos taurus (Bovine), this protein is Cyclin-H (CCNH).